Here is an 828-residue protein sequence, read N- to C-terminus: Neurotrophin receptor-interacting factor 1 (828 aa).

A KRAB 1 domain is found at 14 to 85 (VKFEDVSLTF…QREIPQDTLP (72 aa)). Lys15 is covalently cross-linked (Glycyl lysine isopeptide (Lys-Gly) (interchain with G-Cter in ubiquitin)). One can recognise an SCAN box domain in the interval 158-240 (RQKFRHFQYE…ALLENMTSVS (83 aa)). The 91-residue stretch at 280–370 (VTFQDVAVDF…ESILEDGVKE (91 aa)) folds into the KRAB 2 domain. Disordered stretches follow at residues 328-355 (RELT…RNGT), 377-490 (NQVG…DPIT), and 575-611 (QKGY…LSTS). The segment covering 345–355 (PNTNDLSRNGT) has biased composition (polar residues). Residues 384–394 (EKGHPQKKFSE) are compositionally biased toward basic and acidic residues. Over residues 418–433 (KYVKVKQKGTGKRKGR) the composition is skewed to basic residues. The span at 458–478 (RSGSTPVTHGSSIKKQQQGSE) shows a compositional bias: polar residues. A compositionally biased stretch (basic residues) spans 589 to 599 (SWKHIKPHQKG). Positions 600-611 (SKGERVEELSTS) are enriched in basic and acidic residues. C2H2-type zinc fingers lie at residues 684–706 (CRCS…KKIH), 712–734 (YMCM…LRIH), 740–762 (FECS…LRTH), 768–790 (YHCE…ERTH), and 796–818 (YVCI…QKTH).

It belongs to the krueppel C2H2-type zinc-finger protein family. As to quaternary structure, interacts with NGFR/p75(NTR). Interacts (via KRAB 1 domain) with TRAF6. Interacts (when ubiquitinated at Lys-15) with SQSTM1/p62. Post-translationally, ubiquitinated by TRAF6 at Lys-15 through 'Lys-63'-linked polyubiquitination. 'Lys-63'-linked polyubiquitination occurs in response to NGFR/p75(NTR) cleavage by gamma-secretase and promotes binding with the ICD cleavage product of NGFR/p75(NTR), followed by translocation into the nucleus and subsequent apoptosis. As to expression, ubiquitously expressed at low level. Expressed at higher level in testis.

Its subcellular location is the cytoplasm. The protein localises to the nucleus. In terms of biological role, transcription regulator involved in NGFR/p75(NTR)-mediated apoptosis. Essential component of the NGFR/p75(NTR) apoptotic pathway: upon ligand-binding and subsequent cleavage of NGFR/p75(NTR), binds to the intracellular domain (ICD) cleavage product of NGFR/p75(NTR), translocates to the nucleus and induces apoptosis, possibly by regulating expression of key regulators of apoptosis. Induces NGFR/p75(NTR)-mediated apoptosis in retina and sympathetic neurons. May also regulate expression of neuronal cholesterol biosynthesis genes. Probably acts as a transcription repressor: specifically binds to the 3'-end of zinc-finger coding genes and recruiting chromatin-modifying proteins such as SETDB1 and TRIM28/KAP1, leading to transcription repression. The protein is Neurotrophin receptor-interacting factor 1 (Nrif1) of Mus musculus (Mouse).